The following is a 630-amino-acid chain: Phosphomethylpyrimidine synthase (630 aa).

Disordered regions lie at residues 1-22 and 97-120; these read MADI…TTGP and AQRE…VPAF. Residues N224, M253, Y282, H318, 338 to 340, 379 to 382, and E418 each bind substrate; these read SRG and DGLR. Zn(2+) is bound at residue H422. Y445 is a substrate binding site. H486 is a binding site for Zn(2+). The [4Fe-4S] cluster site is built by C566, C569, and C574.

This sequence belongs to the ThiC family. As to quaternary structure, homodimer. It depends on [4Fe-4S] cluster as a cofactor.

The enzyme catalyses 5-amino-1-(5-phospho-beta-D-ribosyl)imidazole + S-adenosyl-L-methionine = 4-amino-2-methyl-5-(phosphooxymethyl)pyrimidine + CO + 5'-deoxyadenosine + formate + L-methionine + 3 H(+). The protein operates within cofactor biosynthesis; thiamine diphosphate biosynthesis. In terms of biological role, catalyzes the synthesis of the hydroxymethylpyrimidine phosphate (HMP-P) moiety of thiamine from aminoimidazole ribotide (AIR) in a radical S-adenosyl-L-methionine (SAM)-dependent reaction. The chain is Phosphomethylpyrimidine synthase from Sphingopyxis alaskensis (strain DSM 13593 / LMG 18877 / RB2256) (Sphingomonas alaskensis).